The chain runs to 418 residues: Probable serine hydroxymethyltransferase (418 aa).

Residues Leu-118 and 122-124 (GHL) each bind (6S)-5,6,7,8-tetrahydrofolate. Residue Lys-226 is modified to N6-(pyridoxal phosphate)lysine. 351 to 353 (SPF) provides a ligand contact to (6S)-5,6,7,8-tetrahydrofolate.

It belongs to the SHMT family. Homodimer. Pyridoxal 5'-phosphate is required as a cofactor.

The protein localises to the cytoplasm. The enzyme catalyses (6R)-5,10-methylene-5,6,7,8-tetrahydrofolate + glycine + H2O = (6S)-5,6,7,8-tetrahydrofolate + L-serine. Its pathway is one-carbon metabolism; tetrahydrofolate interconversion. Its function is as follows. Catalyzes the reversible interconversion of serine and glycine with tetrahydrofolate (THF) serving as the one-carbon carrier. This reaction serves as the major source of one-carbon groups required for the biosynthesis of purines, thymidylate, methionine, and other important biomolecules. This chain is Probable serine hydroxymethyltransferase, found in Mesomycoplasma hyopneumoniae (strain 232) (Mycoplasma hyopneumoniae).